Reading from the N-terminus, the 58-residue chain is Large ribosomal subunit protein bL32 (58 aa).

The segment covering 1 to 19 (MAVPKKRTSKSKKNMRKAN) has biased composition (basic residues). The interval 1-58 (MAVPKKRTSKSKKNMRKANWKNQAKLAAKKALSLGKSVETQRSHSFVHPRYEEEEEED) is disordered. A compositionally biased stretch (low complexity) spans 20–32 (WKNQAKLAAKKAL).

This sequence belongs to the bacterial ribosomal protein bL32 family.

The protein is Large ribosomal subunit protein bL32 of Trichodesmium erythraeum (strain IMS101).